The chain runs to 1036 residues: Lethal(2) giant larvae protein homolog 1 (1036 aa).

WD repeat units lie at residues 38–71 (SALA…FTGL), 78–119 (VTQM…GLSF), 139–175 (VTVV…GQTL), 199–233 (SLQG…EHVF), 239–271 (LESL…GSPP), 289–331 (AINK…ETLV), 339–373 (VIDF…VLDL), 395–473 (TCSA…YKLS), 517–592 (QKVA…RVLI), and 601–662 (TAVA…LRQS). Position 662 is a phosphoserine (S662). Positions 670–694 (RVSGKKRATTASSKLQEANAQLAEQ) are disordered. The segment covering 678–693 (TTASSKLQEANAQLAE) has biased composition (polar residues). WD repeat units lie at residues 722 to 782 (VRCL…KEVQ), 791 to 843 (AIAV…VSAK), 848 to 901 (LTAH…VHYS), and 915 to 938 (VFTR…SLSA). T957 carries the phosphothreonine modification. Residues S964, S982, and S989 each carry the phosphoserine modification. Residues 980–1002 (PESCEGSPSSAHSKRADTMEPPE) are disordered.

It belongs to the WD repeat L(2)GL family. In terms of assembly, associated with nonmuscle myosin II heavy chain. Interacts with PRKCI/aPKC, PARD6B/Par-6 and PARD6A. Interacts with STX4A. Interacts with DCAF1. Interacts with RAB10 (GDP-bound form); the interaction is direct and promotes RAB10 association with membranes and activation through competition with the Rab inhibitor GDI1. Phosphorylated by PRKCI. As to expression, expressed at high level in the testis and at lower level in ovary, brain, spleen and kidney.

It is found in the early endosome membrane. The protein resides in the golgi apparatus. Its subcellular location is the trans-Golgi network membrane. The protein localises to the golgi apparatus membrane. It localises to the cell projection. It is found in the axon. The protein resides in the cytoplasm. Its subcellular location is the cytoskeleton. Its function is as follows. Cortical cytoskeleton protein found in a complex involved in maintaining cell polarity and epithelial integrity. Involved in the regulation of mitotic spindle orientation, proliferation, differentiation and tissue organization of neuroepithelial cells. Involved in axonogenesis through RAB10 activation thereby regulating vesicular membrane trafficking toward the axonal plasma membrane. This Rattus norvegicus (Rat) protein is Lethal(2) giant larvae protein homolog 1 (Llgl1).